The primary structure comprises 102 residues: NADH-quinone oxidoreductase subunit K 2 (102 aa).

3 helical membrane passes run 5 to 25 (FEHV…CVLV), 30 to 50 (LIML…AFVG), and 65 to 85 (LIIM…VVYL).

The protein belongs to the complex I subunit 4L family. In terms of assembly, NDH-1 is composed of 14 different subunits. Subunits NuoA, H, J, K, L, M, N constitute the membrane sector of the complex.

It localises to the cell inner membrane. It carries out the reaction a quinone + NADH + 5 H(+)(in) = a quinol + NAD(+) + 4 H(+)(out). NDH-1 shuttles electrons from NADH, via FMN and iron-sulfur (Fe-S) centers, to quinones in the respiratory chain. The immediate electron acceptor for the enzyme in this species is believed to be ubiquinone. Couples the redox reaction to proton translocation (for every two electrons transferred, four hydrogen ions are translocated across the cytoplasmic membrane), and thus conserves the redox energy in a proton gradient. This is NADH-quinone oxidoreductase subunit K 2 from Geobacter sulfurreducens (strain ATCC 51573 / DSM 12127 / PCA).